The chain runs to 669 residues: Galactocerebrosidase (669 aa).

Residues 1-26 (MTAAAGSAGHAAVPLLLCALLVPGGA) form the signal peptide. Residues threonine 93, tryptophan 135, and asparagine 181 each coordinate substrate. Residue glutamate 182 is the Proton donor/acceptor of the active site. Catalysis depends on glutamate 258, which acts as the Nucleophile. A disulfide bridge connects residues cysteine 271 and cysteine 378. N-linked (GlcNAc...) asparagine glycosylation occurs at asparagine 363. Arginine 380 is a binding site for substrate. N-linked (GlcNAc...) asparagine glycosylation is found at asparagine 387, asparagine 543, and asparagine 586.

The protein belongs to the glycosyl hydrolase 59 family.

Its subcellular location is the lysosome. It carries out the reaction a beta-D-galactosyl-(1&lt;-&gt;1')-N-acylsphing-4-enine + H2O = an N-acylsphing-4-enine + D-galactose. The catalysed reaction is beta-D-galactosyl-(1&lt;-&gt;1)-sphing-4-enine + H2O = sphing-4-enine + D-galactose. It catalyses the reaction a D-galactosylceramide + H2O = an N-acyl-sphingoid base + D-galactose. Hydrolyzes the galactose ester bonds of glycolipids such as galactosylceramide and galactosylsphingosine. Enzyme with very low activity responsible for the lysosomal catabolism of galactosylceramide, a major lipid in myelin, kidney and epithelial cells of small intestine and colon. This is Galactocerebrosidase from Canis lupus familiaris (Dog).